Consider the following 508-residue polypeptide: tRNA-2-methylthio-N(6)-dimethylallyladenosine synthase (508 aa).

The MTTase N-terminal domain occupies 13–131 (KTYEVRTYGC…LPVLLERARV (119 aa)). Residues Cys22, Cys60, Cys94, Cys168, Cys172, and Cys175 each contribute to the [4Fe-4S] cluster site. Residues 154 to 385 (RESAYAAWVS…ALQEEISWDE (232 aa)) enclose the Radical SAM core domain. Residues 387–455 (KKQVGRTLEL…PHHLLAEGPV (69 aa)) form the TRAM domain.

Belongs to the methylthiotransferase family. MiaB subfamily. As to quaternary structure, monomer. [4Fe-4S] cluster serves as cofactor.

The protein resides in the cytoplasm. It carries out the reaction N(6)-dimethylallyladenosine(37) in tRNA + (sulfur carrier)-SH + AH2 + 2 S-adenosyl-L-methionine = 2-methylsulfanyl-N(6)-dimethylallyladenosine(37) in tRNA + (sulfur carrier)-H + 5'-deoxyadenosine + L-methionine + A + S-adenosyl-L-homocysteine + 2 H(+). Functionally, catalyzes the methylthiolation of N6-(dimethylallyl)adenosine (i(6)A), leading to the formation of 2-methylthio-N6-(dimethylallyl)adenosine (ms(2)i(6)A) at position 37 in tRNAs that read codons beginning with uridine. The chain is tRNA-2-methylthio-N(6)-dimethylallyladenosine synthase from Streptomyces avermitilis (strain ATCC 31267 / DSM 46492 / JCM 5070 / NBRC 14893 / NCIMB 12804 / NRRL 8165 / MA-4680).